The following is a 182-amino-acid chain: Epoxyqueuosine reductase QueH (182 aa).

[4Fe-4S] cluster contacts are provided by C10, C11, C85, and C88. A disulfide bond links C165 and C167.

The protein belongs to the QueH family.

It catalyses the reaction epoxyqueuosine(34) in tRNA + AH2 = queuosine(34) in tRNA + A + H2O. It functions in the pathway tRNA modification; tRNA-queuosine biosynthesis. In terms of biological role, catalyzes the conversion of epoxyqueuosine (oQ) to queuosine (Q), which is a hypermodified base found in the wobble positions of tRNA(Asp), tRNA(Asn), tRNA(His) and tRNA(Tyr). The sequence is that of Epoxyqueuosine reductase QueH from Dehalococcoides mccartyi (strain ATCC BAA-2266 / KCTC 15142 / 195) (Dehalococcoides ethenogenes (strain 195)).